A 209-amino-acid chain; its full sequence is Small ribosomal subunit protein uS4 (209 aa).

Residues 98–164 enclose the S4 RNA-binding domain; the sequence is SRLDNVVYRG…TPFIVARETA (67 aa).

It belongs to the universal ribosomal protein uS4 family. Part of the 30S ribosomal subunit. Contacts protein S5. The interaction surface between S4 and S5 is involved in control of translational fidelity.

Its function is as follows. One of the primary rRNA binding proteins, it binds directly to 16S rRNA where it nucleates assembly of the body of the 30S subunit. In terms of biological role, with S5 and S12 plays an important role in translational accuracy. The sequence is that of Small ribosomal subunit protein uS4 from Frankia casuarinae (strain DSM 45818 / CECT 9043 / HFP020203 / CcI3).